The primary structure comprises 122 residues: Large ribosomal subunit protein uL14 (122 aa).

It belongs to the universal ribosomal protein uL14 family. As to quaternary structure, part of the 50S ribosomal subunit. Forms a cluster with proteins L3 and L19. In the 70S ribosome, L14 and L19 interact and together make contacts with the 16S rRNA in bridges B5 and B8. Can interact with ribosomal silencing factor RsfS, which may inhibit ribosomal subunit association.

Functionally, binds to 23S rRNA. Forms part of two intersubunit bridges in the 70S ribosome. The protein is Large ribosomal subunit protein uL14 of Synechocystis sp. (strain ATCC 27184 / PCC 6803 / Kazusa).